A 342-amino-acid chain; its full sequence is Dihydroorotate dehydrogenase (quinone) (342 aa).

FMN is bound by residues 61–65 and Thr85; that span reads AGLDK. Lys65 lines the substrate pocket. 110–114 contacts substrate; it reads NRMGF. 2 residues coordinate FMN: Asn138 and Asn171. Asn171 lines the substrate pocket. Catalysis depends on Ser174, which acts as the Nucleophile. Substrate is bound at residue Asn176. FMN-binding residues include Lys216 and Thr244. 245–246 is a binding site for substrate; the sequence is NT. Residues Gly267, Gly296, and 317 to 318 contribute to the FMN site; that span reads YS.

The protein belongs to the dihydroorotate dehydrogenase family. Type 2 subfamily. In terms of assembly, monomer. FMN is required as a cofactor.

Its subcellular location is the cell membrane. It catalyses the reaction (S)-dihydroorotate + a quinone = orotate + a quinol. The protein operates within pyrimidine metabolism; UMP biosynthesis via de novo pathway; orotate from (S)-dihydroorotate (quinone route): step 1/1. Functionally, catalyzes the conversion of dihydroorotate to orotate with quinone as electron acceptor. The chain is Dihydroorotate dehydrogenase (quinone) from Pseudomonas paraeruginosa (strain DSM 24068 / PA7) (Pseudomonas aeruginosa (strain PA7)).